The following is a 94-amino-acid chain: Large ribosomal subunit protein uL23 (94 aa).

Belongs to the universal ribosomal protein uL23 family. As to quaternary structure, part of the 50S ribosomal subunit. Contacts protein L29, and trigger factor when it is bound to the ribosome.

One of the early assembly proteins it binds 23S rRNA. One of the proteins that surrounds the polypeptide exit tunnel on the outside of the ribosome. Forms the main docking site for trigger factor binding to the ribosome. The protein is Large ribosomal subunit protein uL23 of Exiguobacterium sibiricum (strain DSM 17290 / CCUG 55495 / CIP 109462 / JCM 13490 / 255-15).